A 227-amino-acid polypeptide reads, in one-letter code: Protein M1425_1941 (227 aa).

The AMMECR1 domain occupies 15-209; that stretch reads EIGRFLIEIA…ETRPDGSDII (195 aa).

In Saccharolobus islandicus (strain M.14.25 / Kamchatka #1) (Sulfolobus islandicus), this protein is Protein M1425_1941.